Consider the following 510-residue polypeptide: Light-independent protochlorophyllide reductase subunit B (510 aa).

Asp-36 contacts [4Fe-4S] cluster. Asp-296 serves as the catalytic Proton donor. 431–432 lines the substrate pocket; it reads GM.

Belongs to the ChlB/BchB/BchZ family. Protochlorophyllide reductase is composed of three subunits; ChlL, ChlN and ChlB. Forms a heterotetramer of two ChlB and two ChlN subunits. It depends on [4Fe-4S] cluster as a cofactor.

Its subcellular location is the plastid. It localises to the chloroplast. The enzyme catalyses chlorophyllide a + oxidized 2[4Fe-4S]-[ferredoxin] + 2 ADP + 2 phosphate = protochlorophyllide a + reduced 2[4Fe-4S]-[ferredoxin] + 2 ATP + 2 H2O. The protein operates within porphyrin-containing compound metabolism; chlorophyll biosynthesis (light-independent). Functionally, component of the dark-operative protochlorophyllide reductase (DPOR) that uses Mg-ATP and reduced ferredoxin to reduce ring D of protochlorophyllide (Pchlide) to form chlorophyllide a (Chlide). This reaction is light-independent. The NB-protein (ChlN-ChlB) is the catalytic component of the complex. This is Light-independent protochlorophyllide reductase subunit B from Auxenochlorella protothecoides (Green microalga).